The sequence spans 66 residues: Large ribosomal subunit protein bL35 (66 aa).

Belongs to the bacterial ribosomal protein bL35 family.

This chain is Large ribosomal subunit protein bL35, found in Parvibaculum lavamentivorans (strain DS-1 / DSM 13023 / NCIMB 13966).